We begin with the raw amino-acid sequence, 173 residues long: Photosystem I assembly protein Ycf3 (173 aa).

3 TPR repeats span residues 35-68 (AYVY…EENS), 72-105 (SETL…NPNQ), and 120-153 (GRIA…NPGG).

Belongs to the Ycf3 family.

Its subcellular location is the cellular thylakoid membrane. In terms of biological role, essential for the assembly of the photosystem I (PSI) complex. May act as a chaperone-like factor to guide the assembly of the PSI subunits. The polypeptide is Photosystem I assembly protein Ycf3 (Synechococcus sp. (strain CC9605)).